The following is a 107-amino-acid chain: uncharacterized protein (107 aa).

The helical transmembrane segment at 12-32 (IILNIFLALLLVYFIFHCIYG) threads the bilayer.

The protein localises to the membrane. This is an uncharacterized protein from Rickettsia prowazekii (strain Madrid E).